Here is a 323-residue protein sequence, read N- to C-terminus: Viral cathepsin (323 aa).

An N-terminal signal peptide occupies residues 1-16 (MNKILFYLFVYGVVNS). The propeptide at 17 to 112 (AAYDLLKAPN…IVLDQPPGKG (96 aa)) is activation peptide. Intrachain disulfides connect C133–C174, C167–C207, and C262–C310. C136 is an active-site residue. N158 carries an N-linked (GlcNAc...) asparagine; by host glycan. Active-site residues include H269 and N289.

Belongs to the peptidase C1 family. As to quaternary structure, interacts with chitinase/CHIA; this interaction maintains VCATH in the host endoplasmic reticulum. In terms of processing, synthesized as an inactive proenzyme and activated by proteolytic removal of the inhibitory propeptide.

The protein resides in the host endoplasmic reticulum. It carries out the reaction Endopeptidase of broad specificity, hydrolyzing substrates of both cathepsin L and cathepsin B.. Functionally, cysteine protease that plays an essential role in host liquefaction to facilitate horizontal transmission of the virus. Accumulates within infected cells as an inactive proenzyme (proV-CATH), which is activated by proteolytic cleavage upon cell death. The chain is Viral cathepsin (VCATH) from Lepidoptera (butterflies and moths).